The sequence spans 729 residues: MLYKGDTLYLDWLEDGIAELVFDAPGSVNKLDTATVASLGQALEVLEKQHDLKGLLLRSNKAAFIVGADITEFLSLFLVPEEQLSQWLHFANSVFNRLEDLPVPTLAAVNGYALGGGCECVLATDYRLATPDLRIGLPETKLGIMPGFGGSVRMPRMLGADSALEIIAAGKDIGAEQALKIGLVDGVVKQEKLIDGAIAVLRQAITGDLDWRAKRQPKLEPLKLSKIEAAMSFTIAKGMVAQTAGKHYPAPMTAVKTIEAAARFGREEALNLENKSFVPLAHTNEARALVGIFLNDQYVKGKAKKLTKDIETPKQAAVLGAGIMGGGIAYQSAWKGVPVIMKDINDKSLNLGMTEAAKLLNKQLERGKIDGLKLAGVISTIHPTLDYAGFDRVDVVVEAVVENPKVKKAVLAETEQKVRPETVLASNTSTIPIRELASALERPENFCGMHFFNPVHRMPLVEIIRGEKSSDETIAKVVAWASKMGKTPIVVNDCPGFFVNRVLFPYFAGFSQLLRDGADFRKVDKVMEKQFGWPMGPAYLLDVVGIDTAHHAQAVMAAGFPQRMQKEYRDAIDALFDASRFGQKNGLGFWRYKEDSKGKPKKEEDAAVDDLLASVSQPKRDFSDDEIIARMMIPMINEVVRCLEEGIIASPAEADMALVYGLGFPPFHGGAFRWLDTQGSAKYLDMAQQYQHLGPLYEVPEGLRNKARHNEPYYPPVEPARPVGSLKTA.

Positions 1–189 are enoyl-CoA hydratase/isomerase; that stretch reads MLYKGDTLYL…KIGLVDGVVK (189 aa). Residue aspartate 296 coordinates substrate. The 3-hydroxyacyl-CoA dehydrogenase stretch occupies residues 311-729; it reads ETPKQAAVLG…ARPVGSLKTA (419 aa). Residues methionine 324, aspartate 343, 400 to 402, lysine 407, and serine 429 each bind NAD(+); that span reads VVE. The active-site For 3-hydroxyacyl-CoA dehydrogenase activity is the histidine 450. Asparagine 453 serves as a coordination point for NAD(+). Residues asparagine 500 and tyrosine 660 each contribute to the substrate site. Positions 708–729 are disordered; the sequence is RHNEPYYPPVEPARPVGSLKTA.

This sequence in the N-terminal section; belongs to the enoyl-CoA hydratase/isomerase family. It in the C-terminal section; belongs to the 3-hydroxyacyl-CoA dehydrogenase family. As to quaternary structure, heterotetramer of two alpha chains (FadB) and two beta chains (FadA).

The catalysed reaction is a (3S)-3-hydroxyacyl-CoA + NAD(+) = a 3-oxoacyl-CoA + NADH + H(+). It carries out the reaction a (3S)-3-hydroxyacyl-CoA = a (2E)-enoyl-CoA + H2O. It catalyses the reaction a 4-saturated-(3S)-3-hydroxyacyl-CoA = a (3E)-enoyl-CoA + H2O. The enzyme catalyses (3S)-3-hydroxybutanoyl-CoA = (3R)-3-hydroxybutanoyl-CoA. The catalysed reaction is a (3Z)-enoyl-CoA = a 4-saturated (2E)-enoyl-CoA. It carries out the reaction a (3E)-enoyl-CoA = a 4-saturated (2E)-enoyl-CoA. It functions in the pathway lipid metabolism; fatty acid beta-oxidation. Its function is as follows. Involved in the aerobic and anaerobic degradation of long-chain fatty acids via beta-oxidation cycle. Catalyzes the formation of 3-oxoacyl-CoA from enoyl-CoA via L-3-hydroxyacyl-CoA. It can also use D-3-hydroxyacyl-CoA and cis-3-enoyl-CoA as substrate. The protein is Fatty acid oxidation complex subunit alpha of Salmonella schwarzengrund (strain CVM19633).